Here is a 485-residue protein sequence, read N- to C-terminus: Regulatory protein ViaA (485 aa).

The protein belongs to the ViaA family. Homodimer. Interacts with RavA.

The protein localises to the cytoplasm. Functionally, component of the RavA-ViaA chaperone complex, which may act on the membrane to optimize the function of some of the respiratory chains. ViaA stimulates the ATPase activity of RavA. This Proteus mirabilis (strain HI4320) protein is Regulatory protein ViaA.